The chain runs to 409 residues: MASSDTERDGGSPEKHSPVTDKHLEHSDLAKSPRGLKHYSKSRSRSREHKRKTDECRKHRSRSRSKEARRHEVKEKSSKKHRPDDSIDRDHSDKVRERLNSSENGEERHRRKEKRSSRGRSYSKSRSRERRHRSRSHDRRKSRSRSKERKRRPRSRSRSRSKHRHRSKSRSRSREKKKRIEKPRRHSRSRSRTPPSPPAFRGRNTAMDAQEALARRLERAKKLQEQREKEMADKQKQQETVAVAAAGGGSVINVAALLASGTQVTPQIAMAAQMAALQAKALAETGISVPSYYNPAAVNPMRFAEQEKKRKMLWQGKKEGDKSQSAEIWEKLNFGNKDQNVKFRKLMGIKNEEEAATSSVDVESFKTLKQQEEVFRNLDAQYEMARSQTHTQRGMGLGFTSSMRGMDTV.

Basic and acidic residues predominate over residues 1-31 (MASSDTERDGGSPEKHSPVTDKHLEHSDLAK). The tract at residues 1 to 204 (MASSDTERDG…PSPPAFRGRN (204 aa)) is disordered. Positions 34-50 (RGLKHYSKSRSRSREHK) are enriched in basic residues. Over residues 64–108 (RSKEARRHEVKEKSSKKHRPDDSIDRDHSDKVRERLNSSENGEER) the composition is skewed to basic and acidic residues. Residues 109–191 (HRRKEKRSSR…KPRRHSRSRS (83 aa)) show a composition bias toward basic residues. A coiled-coil region spans residues 204–244 (NTAMDAQEALARRLERAKKLQEQREKEMADKQKQQETVAVA).

Belongs to the RSRC2 family.

The sequence is that of Arginine/serine-rich coiled-coil protein 2 (rsrc2) from Xenopus tropicalis (Western clawed frog).